The primary structure comprises 279 residues: Urease accessory protein UreD (279 aa).

It belongs to the UreD family. As to quaternary structure, ureD, UreF and UreG form a complex that acts as a GTP-hydrolysis-dependent molecular chaperone, activating the urease apoprotein by helping to assemble the nickel containing metallocenter of UreC. The UreE protein probably delivers the nickel.

It is found in the cytoplasm. Functionally, required for maturation of urease via the functional incorporation of the urease nickel metallocenter. The chain is Urease accessory protein UreD from Paracoccus denitrificans (strain Pd 1222).